The primary structure comprises 522 residues: Sulfite reductase [NADPH] flavoprotein alpha-component (522 aa).

Residues 60 to 198 enclose the Flavodoxin-like domain; it reads ITILFGSQTG…DTERWSSDAL (139 aa). Positions 217-242 are disordered; the sequence is TLRSHQDLRSHQEQSRNRARPYDKDN. Residues 220–242 are compositionally biased toward basic and acidic residues; sequence SHQDLRSHQEQSRNRARPYDKDN. An FAD-binding FR-type domain is found at 241-399; it reads DNPYTATLLE…VAPYRAFLQQ (159 aa).

In terms of assembly, alpha(8)-beta(8). The alpha component is a flavoprotein, the beta component is a hemoprotein. Requires FAD as cofactor. It depends on FMN as a cofactor.

The enzyme catalyses hydrogen sulfide + 3 NADP(+) + 3 H2O = sulfite + 3 NADPH + 4 H(+). Its function is as follows. Catalyzes the 6-electron reduction of sulfite to sulfide. This is one of several activities required for the biosynthesis of L-cysteine from sulfate. The flavo-protein component catalyzes the electron flow from NADPH -&gt; FAD -&gt; FMN to the hemoprotein component. In Thiocapsa roseopersicina, this protein is Sulfite reductase [NADPH] flavoprotein alpha-component (cysJ).